A 125-amino-acid chain; its full sequence is Small ribosomal subunit protein uS12 (125 aa).

At aspartate 89 the chain carries 3-methylthioaspartic acid.

It belongs to the universal ribosomal protein uS12 family. In terms of assembly, part of the 30S ribosomal subunit. Contacts proteins S8 and S17. May interact with IF1 in the 30S initiation complex.

Its function is as follows. With S4 and S5 plays an important role in translational accuracy. Interacts with and stabilizes bases of the 16S rRNA that are involved in tRNA selection in the A site and with the mRNA backbone. Located at the interface of the 30S and 50S subunits, it traverses the body of the 30S subunit contacting proteins on the other side and probably holding the rRNA structure together. The combined cluster of proteins S8, S12 and S17 appears to hold together the shoulder and platform of the 30S subunit. The sequence is that of Small ribosomal subunit protein uS12 from Cupriavidus necator (strain ATCC 17699 / DSM 428 / KCTC 22496 / NCIMB 10442 / H16 / Stanier 337) (Ralstonia eutropha).